Here is a 98-residue protein sequence, read N- to C-terminus: Putative pterin-4-alpha-carbinolamine dehydratase (98 aa).

The protein belongs to the pterin-4-alpha-carbinolamine dehydratase family.

It carries out the reaction (4aS,6R)-4a-hydroxy-L-erythro-5,6,7,8-tetrahydrobiopterin = (6R)-L-erythro-6,7-dihydrobiopterin + H2O. This chain is Putative pterin-4-alpha-carbinolamine dehydratase, found in Mesorhizobium japonicum (strain LMG 29417 / CECT 9101 / MAFF 303099) (Mesorhizobium loti (strain MAFF 303099)).